Consider the following 404-residue polypeptide: MQYSEIMIRYGELSTKKKNRMRFINKLKNNMEHVLSIYPDVSVKTDRDRGHVYLNGTDYHEVAESLKEIFGIQAFSPSFKVEKNVDTLVKAVQEIMTSVYKDGMTFKITAKRSDHSFELDSRALNHTLGDAVFSVLPNIKAQMKQPDINLKVEIRDEAAYISYENIRGAGGLPVGTSGKGMLMLSGGIDSPVAGYLALKRGVDIEAVHFASPPYTSPGALKKAHDLTRKLTKFGGNIQFIEVPFTEIQEEIKEKAPEAYLMTLTRRFMMRITDRIRENRNGLVIINGESLGQVASQTLESMQAINAVTATPIIRPVVTMDKLEIIDIAQKIDTFDISIQPFEDCCTIFAPDRPKTNPKIKNTEQYEKRMDVEGLVERAVAGIMVTTIQPQADSDDVDDLIDDLL.

The THUMP domain occupies 60–165 (HEVAESLKEI…DEAAYISYEN (106 aa)). Residues 183 to 184 (ML), 208 to 209 (HF), Arg265, Gly287, and Gln296 each bind ATP.

This sequence belongs to the ThiI family.

It localises to the cytoplasm. The catalysed reaction is [ThiI sulfur-carrier protein]-S-sulfanyl-L-cysteine + a uridine in tRNA + 2 reduced [2Fe-2S]-[ferredoxin] + ATP + H(+) = [ThiI sulfur-carrier protein]-L-cysteine + a 4-thiouridine in tRNA + 2 oxidized [2Fe-2S]-[ferredoxin] + AMP + diphosphate. It carries out the reaction [ThiS sulfur-carrier protein]-C-terminal Gly-Gly-AMP + S-sulfanyl-L-cysteinyl-[cysteine desulfurase] + AH2 = [ThiS sulfur-carrier protein]-C-terminal-Gly-aminoethanethioate + L-cysteinyl-[cysteine desulfurase] + A + AMP + 2 H(+). It functions in the pathway cofactor biosynthesis; thiamine diphosphate biosynthesis. Catalyzes the ATP-dependent transfer of a sulfur to tRNA to produce 4-thiouridine in position 8 of tRNAs, which functions as a near-UV photosensor. Also catalyzes the transfer of sulfur to the sulfur carrier protein ThiS, forming ThiS-thiocarboxylate. This is a step in the synthesis of thiazole, in the thiamine biosynthesis pathway. The sulfur is donated as persulfide by IscS. The polypeptide is Probable tRNA sulfurtransferase (Streptococcus agalactiae serotype III (strain NEM316)).